The chain runs to 427 residues: UPF0229 protein YeaH (427 aa).

The segment covering 79–90 has biased composition (basic and acidic residues); the sequence is NDHFVQNDRIER. The segment at 79-110 is disordered; the sequence is NDHFVQNDRIERPQGGGGGSGSGQGQASQDGE. A compositionally biased stretch (gly residues) spans 92 to 102; the sequence is QGGGGGSGSGQ.

It belongs to the UPF0229 family.

The protein is UPF0229 protein YeaH of Shigella boydii serotype 18 (strain CDC 3083-94 / BS512).